The sequence spans 187 residues: GTP cyclohydrolase 1 (187 aa).

The Zn(2+) site is built by Cys78, His81, and Cys150.

Belongs to the GTP cyclohydrolase I family. In terms of assembly, homomer.

The enzyme catalyses GTP + H2O = 7,8-dihydroneopterin 3'-triphosphate + formate + H(+). The protein operates within cofactor biosynthesis; 7,8-dihydroneopterin triphosphate biosynthesis; 7,8-dihydroneopterin triphosphate from GTP: step 1/1. The polypeptide is GTP cyclohydrolase 1 (Brevibacillus brevis (strain 47 / JCM 6285 / NBRC 100599)).